A 249-amino-acid chain; its full sequence is Chymase (249 aa).

The signal sequence occupies residues 1–19 (MHCLPLTLLLLLLCSRAEA). Residues 20 to 21 (EE) constitute a propeptide, activation peptide. Residues 22 to 245 (IIGGTESKPH…YRPWINKVLK (224 aa)) enclose the Peptidase S1 domain. A disulfide bridge connects residues Cys51 and Cys67. Catalysis depends on charge relay system residues His66 and Asp110. Disulfide bonds link Cys144–Cys209 and Cys175–Cys188. Ser203 acts as the Charge relay system in catalysis.

Belongs to the peptidase S1 family. Granzyme subfamily.

Its subcellular location is the secreted. The protein resides in the cytoplasmic granule. The catalysed reaction is Preferential cleavage: Phe-|-Xaa &gt; Tyr-|-Xaa &gt; Trp-|-Xaa &gt; Leu-|-Xaa.. In terms of biological role, major secreted protease of mast cells with suspected roles in vasoactive peptide generation, extracellular matrix degradation, and regulation of gland secretion. This Canis lupus familiaris (Dog) protein is Chymase (CMA1).